We begin with the raw amino-acid sequence, 184 residues long: Photosystem I assembly protein Ycf3 (184 aa).

3 TPR repeats span residues 31-64 (AFAY…DEDQ), 68-101 (SYTL…NSNL), and 131-164 (MEIS…APDN).

This sequence belongs to the Ycf3 family.

The protein resides in the plastid. Its subcellular location is the chloroplast thylakoid membrane. In terms of biological role, essential for the assembly of the photosystem I (PSI) complex. May act as a chaperone-like factor to guide the assembly of the PSI subunits. This Thalassiosira pseudonana (Marine diatom) protein is Photosystem I assembly protein Ycf3.